The sequence spans 357 residues: UPF0283 membrane protein BMEI0952 (357 aa).

A disordered region spans residues 1 to 36 (MSDKTPRKPTAFRLEQPARVSAASEQEEPRRPRAVK). Positions 27-36 (EEPRRPRAVK) are enriched in basic and acidic residues. Helical transmembrane passes span 78 to 98 (ILFG…TEDL) and 109 to 129 (LGWT…AIIL).

The protein belongs to the UPF0283 family.

Its subcellular location is the cell inner membrane. This chain is UPF0283 membrane protein BMEI0952, found in Brucella melitensis biotype 1 (strain ATCC 23456 / CCUG 17765 / NCTC 10094 / 16M).